A 388-amino-acid polypeptide reads, in one-letter code: 1-deoxy-D-xylulose 5-phosphate reductoisomerase (388 aa).

Residues T10, G11, S12, I13, K37, N38, and N123 each contribute to the NADPH site. K124 provides a ligand contact to 1-deoxy-D-xylulose 5-phosphate. An NADPH-binding site is contributed by E125. Residue D149 participates in Mn(2+) binding. 1-deoxy-D-xylulose 5-phosphate is bound by residues S150, E151, S175, and H198. E151 provides a ligand contact to Mn(2+). G204 is a binding site for NADPH. Residues S211, N216, K217, and E220 each contribute to the 1-deoxy-D-xylulose 5-phosphate site. Position 220 (E220) interacts with Mn(2+).

Belongs to the DXR family. Mg(2+) serves as cofactor. Mn(2+) is required as a cofactor.

The catalysed reaction is 2-C-methyl-D-erythritol 4-phosphate + NADP(+) = 1-deoxy-D-xylulose 5-phosphate + NADPH + H(+). The protein operates within isoprenoid biosynthesis; isopentenyl diphosphate biosynthesis via DXP pathway; isopentenyl diphosphate from 1-deoxy-D-xylulose 5-phosphate: step 1/6. In terms of biological role, catalyzes the NADPH-dependent rearrangement and reduction of 1-deoxy-D-xylulose-5-phosphate (DXP) to 2-C-methyl-D-erythritol 4-phosphate (MEP). This chain is 1-deoxy-D-xylulose 5-phosphate reductoisomerase, found in Pelagibacter ubique (strain HTCC1062).